The following is a 568-amino-acid chain: Serine/threonine-protein kinase WNK2 (568 aa).

Positions 24-281 (GRYDEILGKG…ALELLQDPFL (258 aa)) constitute a Protein kinase domain. ATP-binding positions include 104 to 107 (TELF) and K154. D171 acts as the Proton acceptor in catalysis. Residues 453-473 (SSGEKSHHNHHEFDSSEDKSC) form a disordered region. The span at 463 to 472 (HEFDSSEDKS) shows a compositional bias: basic and acidic residues.

This sequence belongs to the protein kinase superfamily. Ser/Thr protein kinase family. WNK subfamily. Autophosphorylated.

The enzyme catalyses L-seryl-[protein] + ATP = O-phospho-L-seryl-[protein] + ADP + H(+). The catalysed reaction is L-threonyl-[protein] + ATP = O-phospho-L-threonyl-[protein] + ADP + H(+). Its function is as follows. Regulates flowering time by modulating the photoperiod pathway. Possesses kinase activity in vitro. The polypeptide is Serine/threonine-protein kinase WNK2 (WNK2) (Arabidopsis thaliana (Mouse-ear cress)).